A 159-amino-acid chain; its full sequence is Growth arrest and DNA damage-inducible protein GADD45 gamma (159 aa).

Positions 43 to 86 (VYESAKVLNVDPDNVTFCVLAAGEEDEGDIALQIHFTLIQAFCC) are homodimerization.

This sequence belongs to the GADD45 family. As to quaternary structure, undergoes concentration-dependent homodimerization, which is required for growth inhibititory activity and enhances interaction with PCNA. Interacts with GADD45GIP1. Interacts with PCNA.

Its function is as follows. Involved in the regulation of growth and apoptosis. Mediates activation of stress-responsive MTK1/MEKK4 MAPKKK. This Homo sapiens (Human) protein is Growth arrest and DNA damage-inducible protein GADD45 gamma (GADD45G).